A 603-amino-acid polypeptide reads, in one-letter code: Prostaglandin G/H synthase 1 (603 aa).

An N-terminal signal peptide occupies residues 1–27 (MSRGSRLHRWPLLLLLLLLLPPPPVLP). One can recognise an EGF-like domain in the interval 35–73 (PVNPCCYYPCQHQGICVRFGLDRYQCDCTRTGYSGPNCT). 4 disulfide bridges follow: Cys-39/Cys-50, Cys-40/Cys-162, Cys-44/Cys-60, and Cys-62/Cys-72. N-linked (GlcNAc...) asparagine glycans are attached at residues Asn-71, Asn-107, and Asn-147. His-210 serves as the catalytic Proton acceptor. The For cyclooxygenase activity role is filled by Tyr-388. His-391 contributes to the heme b binding site. Cys-572 and Cys-578 form a disulfide bridge.

This sequence belongs to the prostaglandin G/H synthase family. As to quaternary structure, homodimer. Heme b serves as cofactor. N-glycosylated. N-linked glycosylation is necessary for enzymatic activity. Brain cortex. Isoform 2 is expressed in the cerebral cortex and heart.

The protein resides in the microsome membrane. It localises to the endoplasmic reticulum membrane. It carries out the reaction (5Z,8Z,11Z,14Z)-eicosatetraenoate + AH2 + 2 O2 = prostaglandin H2 + A + H2O. The enzyme catalyses (5Z,8Z,11Z,14Z)-eicosatetraenoate + 2 O2 = prostaglandin G2. The catalysed reaction is prostaglandin G2 + AH2 = prostaglandin H2 + A + H2O. It catalyses the reaction (9Z,12Z)-octadecadienoate + AH2 + O2 = (9R)-hydroxy-(10E,12Z)-octadecadienoate + A + H2O. It carries out the reaction (9Z,12Z)-octadecadienoate + AH2 + O2 = (9S)-hydroxy-(10E,12Z)-octadecadienoate + A + H2O. The enzyme catalyses (9Z,12Z)-octadecadienoate + AH2 + O2 = (13S)-hydroxy-(9Z,11E)-octadecadienoate + A + H2O. The catalysed reaction is (9Z,12Z)-octadecadienoate + AH2 + O2 = (13R)-hydroxy-(9Z,11E)-octadecadienoate + A + H2O. It functions in the pathway lipid metabolism; prostaglandin biosynthesis. With respect to regulation, the cyclooxygenase activity is inhibited by nonsteroidal anti-inflammatory drugs (NSAIDs) including ibuprofen, flurbiprofen, ketoprofen, naproxen, flurbiprofen, anirolac, fenclofenac and diclofenac. Dual cyclooxygenase and peroxidase that plays an important role in the biosynthesis pathway of prostanoids, a class of C20 oxylipins mainly derived from arachidonate ((5Z,8Z,11Z,14Z)-eicosatetraenoate, AA, C20:4(n-6)), with a particular role in the inflammatory response. The cyclooxygenase activity oxygenates AA to the hydroperoxy endoperoxide prostaglandin G2 (PGG2), and the peroxidase activity reduces PGG2 to the hydroxy endoperoxide prostaglandin H2 (PGH2), the precursor of all 2-series prostaglandins and thromboxanes. This complex transformation is initiated by abstraction of hydrogen at carbon 13 (with S-stereochemistry), followed by insertion of molecular O2 to form the endoperoxide bridge between carbon 9 and 11 that defines prostaglandins. The insertion of a second molecule of O2 (bis-oxygenase activity) yields a hydroperoxy group in PGG2 that is then reduced to PGH2 by two electrons. Involved in the constitutive production of prostanoids in particular in the stomach and platelets. In gastric epithelial cells, it is a key step in the generation of prostaglandins, such as prostaglandin E2 (PGE2), which plays an important role in cytoprotection. In platelets, it is involved in the generation of thromboxane A2 (TXA2), which promotes platelet activation and aggregation, vasoconstriction and proliferation of vascular smooth muscle cells. Can also use linoleate (LA, (9Z,12Z)-octadecadienoate, C18:2(n-6)) as substrate and produce hydroxyoctadecadienoates (HODEs) in a regio- and stereospecific manner, being (9R)-HODE ((9R)-hydroxy-(10E,12Z)-octadecadienoate) and (13S)-HODE ((13S)-hydroxy-(9Z,11E)-octadecadienoate) its major products. In Canis lupus familiaris (Dog), this protein is Prostaglandin G/H synthase 1 (PTGS1).